Here is a 364-residue protein sequence, read N- to C-terminus: tRNA 2-selenouridine synthase (364 aa).

Residues 14–137 (LIADTPIIDV…LRQTAIQATI (124 aa)) enclose the Rhodanese domain. Residue cysteine 97 is the S-selanylcysteine intermediate of the active site.

It belongs to the SelU family. Monomer.

It catalyses the reaction 5-methylaminomethyl-2-thiouridine(34) in tRNA + selenophosphate + (2E)-geranyl diphosphate + H2O + H(+) = 5-methylaminomethyl-2-selenouridine(34) in tRNA + (2E)-thiogeraniol + phosphate + diphosphate. It carries out the reaction 5-methylaminomethyl-2-thiouridine(34) in tRNA + (2E)-geranyl diphosphate = 5-methylaminomethyl-S-(2E)-geranyl-thiouridine(34) in tRNA + diphosphate. The catalysed reaction is 5-methylaminomethyl-S-(2E)-geranyl-thiouridine(34) in tRNA + selenophosphate + H(+) = 5-methylaminomethyl-2-(Se-phospho)selenouridine(34) in tRNA + (2E)-thiogeraniol. The enzyme catalyses 5-methylaminomethyl-2-(Se-phospho)selenouridine(34) in tRNA + H2O = 5-methylaminomethyl-2-selenouridine(34) in tRNA + phosphate. Its function is as follows. Involved in the post-transcriptional modification of the uridine at the wobble position (U34) of tRNA(Lys), tRNA(Glu) and tRNA(Gln). Catalyzes the conversion of 2-thiouridine (S2U-RNA) to 2-selenouridine (Se2U-RNA). Acts in a two-step process involving geranylation of 2-thiouridine (S2U) to S-geranyl-2-thiouridine (geS2U) and subsequent selenation of the latter derivative to 2-selenouridine (Se2U) in the tRNA chain. The sequence is that of tRNA 2-selenouridine synthase from Shigella dysenteriae serotype 1 (strain Sd197).